Here is a 473-residue protein sequence, read N- to C-terminus: Photosystem II CP43 reaction center protein (473 aa).

The propeptide occupies 1–14; the sequence is MKTLYSLRRFYHVE. An N-acetylthreonine modification is found at Thr-15. A Phosphothreonine modification is found at Thr-15. 5 helical membrane-spanning segments follow: residues 69 to 93, 134 to 155, 178 to 200, 255 to 275, and 291 to 312; these read LFEVAHFVPEKPMYEQGLILLPHLA, LLGPETLEESFPFFGYVWKDRN, KALYFGGVYDTWAPGGGDVRKIT, KPFAWARRALVWSGEAYLSYS, and WFNNTAYPSEFYGPTGPEASQA. Position 367 (Glu-367) interacts with [CaMn4O5] cluster. The chain crosses the membrane as a helical span at residues 447-471; that stretch reads RARAAAAGFEKGIDRDLEPVLFMTP.

This sequence belongs to the PsbB/PsbC family. PsbC subfamily. In terms of assembly, PSII is composed of 1 copy each of membrane proteins PsbA, PsbB, PsbC, PsbD, PsbE, PsbF, PsbH, PsbI, PsbJ, PsbK, PsbL, PsbM, PsbT, PsbX, PsbY, PsbZ, Psb30/Ycf12, at least 3 peripheral proteins of the oxygen-evolving complex and a large number of cofactors. It forms dimeric complexes. The cofactor is Binds multiple chlorophylls and provides some of the ligands for the Ca-4Mn-5O cluster of the oxygen-evolving complex. It may also provide a ligand for a Cl- that is required for oxygen evolution. PSII binds additional chlorophylls, carotenoids and specific lipids..

The protein localises to the plastid. Its subcellular location is the chloroplast thylakoid membrane. One of the components of the core complex of photosystem II (PSII). It binds chlorophyll and helps catalyze the primary light-induced photochemical processes of PSII. PSII is a light-driven water:plastoquinone oxidoreductase, using light energy to abstract electrons from H(2)O, generating O(2) and a proton gradient subsequently used for ATP formation. This chain is Photosystem II CP43 reaction center protein, found in Carica papaya (Papaya).